The sequence spans 110 residues: MEVAAKLSGARISAQKARLVADQIRGKKVGEALNLLAFSSKKAAEILKKVLESAVANAEHNEGADVDDLKVSTVFVNEGRSLKRIMPRAKGRADRIVKRSCHITVKVADK.

Belongs to the universal ribosomal protein uL22 family. Part of the 50S ribosomal subunit.

Its function is as follows. This protein binds specifically to 23S rRNA; its binding is stimulated by other ribosomal proteins, e.g. L4, L17, and L20. It is important during the early stages of 50S assembly. It makes multiple contacts with different domains of the 23S rRNA in the assembled 50S subunit and ribosome. Functionally, the globular domain of the protein is located near the polypeptide exit tunnel on the outside of the subunit, while an extended beta-hairpin is found that lines the wall of the exit tunnel in the center of the 70S ribosome. This is Large ribosomal subunit protein uL22 from Pseudomonas savastanoi pv. phaseolicola (strain 1448A / Race 6) (Pseudomonas syringae pv. phaseolicola (strain 1448A / Race 6)).